A 424-amino-acid chain; its full sequence is Hemagglutinin-esterase (424 aa).

The signal sequence occupies residues Met-1–Ser-16. Residues Phe-7 to Gly-127 are esterase domain 1. The Virion surface segment spans residues Leu-17–Ile-392. The active-site Nucleophile is the Ser-40. Cys-44 and Cys-65 form a disulfide bridge. N-linked (GlcNAc...) asparagine; by host glycosylation is found at Asn-54, Asn-89, Asn-153, Asn-236, and Asn-301. Cystine bridges form between Cys-113-Cys-162, Cys-197-Cys-276, and Cys-205-Cys-249. Residues Leu-128–Leu-266 form a receptor binding region. The interval Leu-267–Thr-379 is esterase domain 2. Cys-307 and Cys-312 form a disulfide bridge. Residue Asn-316 is glycosylated (N-linked (GlcNAc...) asparagine; by host). Active-site charge relay system residues include Asp-326 and His-329. Cys-347 and Cys-371 are disulfide-bonded. The N-linked (GlcNAc...) asparagine; by host glycan is linked to Asn-358. A helical transmembrane segment spans residues Ile-393–Phe-413. Residues Met-414–Ala-424 lie on the Intravirion side of the membrane. Asn-417 is a glycosylation site (N-linked (GlcNAc...) asparagine; by host).

This sequence belongs to the influenza type C/coronaviruses hemagglutinin-esterase family. In terms of assembly, homodimer; disulfide-linked. Forms a complex with the M protein in the pre-Golgi. Associates then with S-M complex to form a ternary complex S-M-HE. In terms of processing, N-glycosylated in the host RER.

The protein localises to the virion membrane. It is found in the host cell membrane. It catalyses the reaction N-acetyl-9-O-acetylneuraminate + H2O = N-acetylneuraminate + acetate + H(+). The catalysed reaction is N-acetyl-4-O-acetylneuraminate + H2O = N-acetylneuraminate + acetate + H(+). Its function is as follows. Structural protein that makes short spikes at the surface of the virus. Contains receptor binding and receptor-destroying activities. Mediates de-O-acetylation of N-acetyl-4-O-acetylneuraminic acid, which is probably the receptor determinant recognized by the virus on the surface of erythrocytes and susceptible cells. This receptor-destroying activity is important for virus release as it probably helps preventing self-aggregation and ensures the efficient spread of the progeny virus from cell to cell. May serve as a secondary viral attachment protein for initiating infection, the spike protein being the major one. May become a target for both the humoral and the cellular branches of the immune system. This chain is Hemagglutinin-esterase, found in Bovine coronavirus (strain Ontario) (BCoV).